A 420-amino-acid polypeptide reads, in one-letter code: Serine hydroxymethyltransferase (420 aa).

(6S)-5,6,7,8-tetrahydrofolate contacts are provided by residues Leu118 and 122 to 124 (GHL). N6-(pyridoxal phosphate)lysine is present on Lys227.

The protein belongs to the SHMT family. In terms of assembly, homodimer. Requires pyridoxal 5'-phosphate as cofactor.

The protein resides in the cytoplasm. It catalyses the reaction (6R)-5,10-methylene-5,6,7,8-tetrahydrofolate + glycine + H2O = (6S)-5,6,7,8-tetrahydrofolate + L-serine. It participates in one-carbon metabolism; tetrahydrofolate interconversion. Its pathway is amino-acid biosynthesis; glycine biosynthesis; glycine from L-serine: step 1/1. In terms of biological role, catalyzes the reversible interconversion of serine and glycine with tetrahydrofolate (THF) serving as the one-carbon carrier. This reaction serves as the major source of one-carbon groups required for the biosynthesis of purines, thymidylate, methionine, and other important biomolecules. Also exhibits THF-independent aldolase activity toward beta-hydroxyamino acids, producing glycine and aldehydes, via a retro-aldol mechanism. This Persephonella marina (strain DSM 14350 / EX-H1) protein is Serine hydroxymethyltransferase.